Consider the following 8384-residue polypeptide: Mucin-19 (8384 aa).

The signal sequence occupies residues 1–21 (MKLILWYLVVALWCFFKDVEA). Disordered regions lie at residues 33 to 197 (AASR…YGAG), 222 to 247 (SKAD…PDAG), 279 to 305 (GDTG…IDLG), and 332 to 467 (QEGF…PEAT). Composition is skewed to low complexity over residues 35–48 (SRSG…SSSG) and 88–98 (GGFFNSSSSSG). The segment covering 169 to 184 (DKSRERWDAGNSRSED) has biased composition (basic and acidic residues). A compositionally biased stretch (polar residues) spans 187 to 197 (ADSTNTRYGAG). Over residues 279–299 (GDTGISSKTVEGNQTSSSGGS) the composition is skewed to polar residues. The span at 359–369 (GSDSSSSGDSS) shows a compositional bias: low complexity. Over residues 370–381 (ARNGFENSSGIS) the composition is skewed to polar residues. 2 stretches are compositionally biased toward low complexity: residues 424–435 (SDSGGNTWSSDS) and 443–452 (TSSSEYSTSG). VWFD domains follow at residues 478 to 649 (GEIS…QHCN), 815 to 995 (GRCK…SSCI), and 1274 to 1447 (TICH…QECS). 8 disulfides stabilise this stretch: Cys-502–Cys-648, Cys-817–Cys-952, Cys-838–Cys-994, Cys-857–Cys-865, Cys-1276–Cys-1411, Cys-1298–Cys-1446, Cys-1307–Cys-1408, and Cys-1323–Cys-1330. Disordered stretches follow at residues 1680 to 1699 (TSSS…PFTT), 1732 to 2464 (AGTT…KSPG), 2484 to 2526 (LESE…TEGS), 2540 to 2827 (RPLD…MTGT), 2850 to 2917 (STVG…LGTI), 2984 to 3027 (VTTG…SGTT), 3075 to 3368 (GTTG…GKTG), 3386 to 3428 (TTRL…GKTG), 3585 to 3628 (ETTG…TNGL), 3667 to 3736 (GSSA…TGLP), 4105 to 4147 (TGSS…NGLS), 4187 to 4251 (SAGV…AEVT), 4315 to 4390 (GLSA…SARV), 4414 to 4455 (TGSS…TNGQ), 4510 to 4583 (TGTT…TGLP), 4790 to 4843 (TGTT…TGLP), 4895 to 4930 (SSAG…AGVT), 5130 to 5161 (TGTT…GVTG), 5429 to 5452 (VTGT…VTGK), 5464 to 5494 (GPSA…GTTG), 5880 to 5918 (GTSI…SAEM), 6069 to 6403 (TGKT…STES), 6440 to 6918 (GRAT…ETTK), 6953 to 7223 (GTSE…TGFK), 7250 to 7749 (SFST…SKTG), 7783 to 7975 (KNGS…EAGS), and 8020 to 8133 (SGRS…VSQP). 3 stretches are compositionally biased toward low complexity: residues 1732-1746 (AGTT…TGAA), 1772-1813 (PGEA…TTGP), and 1820-1833 (GATS…EGMS). Over residues 1835–1860 (VTGQSLGSTAGSDSEITAKTSFTGSS) the composition is skewed to polar residues. A compositionally biased stretch (low complexity) spans 1868–1879 (PSPGSPGHFSGG). Residues 1880–1905 (TTEWGNVATTGAAGENTSGALGSTEG) are compositionally biased toward polar residues. Positions 1909-1921 (ATTSAGSGNTAGT) are enriched in low complexity. The span at 1950–1968 (GSSTPGEADIGNTSFGKSG) shows a compositional bias: polar residues. Low complexity-rich tracts occupy residues 1969-1983 (TPTV…SPVS) and 2013-2049 (GGKI…SGPS). Residues 2055–2100 (NYGQSSEIPGTIKSSSDVSGTMGQSDTTSGPSVAVTRTSEQSSGVT) are compositionally biased toward polar residues. Low complexity-rich tracts occupy residues 2132 to 2147 (TTGS…GPSS) and 2159 to 2170 (GSGTSGQSVTGS). Polar residues-rich tracts occupy residues 2171–2186 (RATG…TVSF) and 2209–2225 (GSGT…TTRL). 2 stretches are compositionally biased toward low complexity: residues 2233–2246 (TESS…TTPS) and 2280–2313 (SGPS…TKPS). The interval 2238–6086 (GVTGTTTPSA…GVTGTTGLSA (3849 aa)) is approximate repeats of G-V-T-G-T-T-G-P-S-A. Composition is skewed to polar residues over residues 2316 to 2332 (RTGT…TTEP) and 2354 to 2372 (ATES…TTIP). Residues 2403–2419 (SSGGSGATRSSGGGMGT) show a composition bias toward gly residues. The segment covering 2420-2441 (TGQSTARSETTGPLFGLTGTFG) has biased composition (low complexity). Over residues 2442 to 2460 (QSATVTGTSSNSAGVTTPE) the composition is skewed to polar residues. Composition is skewed to low complexity over residues 2512-2526 (SAGE…TEGS), 2545-2571 (GSGT…TTRK), and 2578-2589 (TTGLSGLTGTSG). 2 stretches are compositionally biased toward polar residues: residues 2595–2610 (TGTS…TSEK) and 2638–2653 (TRPS…QSAR). A compositionally biased stretch (low complexity) spans 2654–2681 (VTETVGASAGVTGTTGPSTEGSGATGPS). 2 stretches are compositionally biased toward polar residues: residues 2695-2748 (SGTT…TGTT) and 2755-2770 (TETT…TTGP). The span at 2787–2799 (ATRSSGGETETTG) shows a compositional bias: low complexity. Polar residues-rich tracts occupy residues 2800-2827 (QSAV…MTGT), 2850-2859 (STVGLETTRP), and 2874-2892 (AQTT…QSAR). The span at 2894 to 2910 (TGASGPSVGVTGTTGPA) shows a compositional bias: low complexity. Residues 2984 to 2998 (VTTGPSVTGVETTAK) are compositionally biased toward polar residues. The span at 2999-3027 (TTSGGLSTTISSVGGTGTTGQSPERSGTT) shows a compositional bias: low complexity. Residues 3099 to 3109 (PSITGSGTTRP) show a composition bias toward polar residues. Residues 3114 to 3130 (SWTAGTSSGGHSTTSPS) are compositionally biased toward low complexity. Positions 3131 to 3159 (VRGTETTGQSAAESVTTGPVTGYTETSGP) are enriched in polar residues. Low complexity predominate over residues 3172-3188 (TVTQTTGSSAAVSGTTV). The span at 3189–3224 (QSLTVSGTTRPSSGQTEITGSSVKESGTTESSAVRS) shows a compositional bias: polar residues. The segment covering 3225–3277 (GTTGPTAGVTGTNGPSSAGVTGITGSSPGVTGTTGSSPGVTGTTGSSARSGTS) has biased composition (low complexity). Polar residues-rich tracts occupy residues 3303 to 3317 (ITGT…TGTT) and 3324 to 3362 (TGTT…SSAG). Low complexity predominate over residues 3390–3417 (SAGVTGTTGPSPGVTGTTGTPAGVTGTT). Composition is skewed to polar residues over residues 3702–3728 (VTGT…TTGP) and 4105–4116 (TGSSARSGTSIP). The span at 4117–4126 (SVGETGTTRT) shows a compositional bias: low complexity. The span at 4320–4346 (VTGTTRPSAGVTGTTGQSAEVTGTTEP) shows a compositional bias: polar residues. Composition is skewed to low complexity over residues 4347–4385 (SAGL…GTTG) and 4414–4426 (TGSS…STPS). Low complexity-rich tracts occupy residues 5469 to 5494 (VTGT…GTTG) and 5889 to 5903 (TGTT…TTTG). 3 stretches are compositionally biased toward polar residues: residues 5908-5918 (ITGTNGLSAEM), 6071-6103 (KTRS…TTKT), and 6111-6121 (TRPSAGITATT). Residues 6156-6168 (TTTGTTGVTTGTT) are compositionally biased toward low complexity. Polar residues-rich tracts occupy residues 6217–6248 (EVST…TATT) and 6257–6275 (APGS…SAST). Residues 6284–6295 (TGSTRGVRTTGS) are compositionally biased toward low complexity. 2 stretches are compositionally biased toward polar residues: residues 6303-6323 (GEFS…TTLT) and 6336-6346 (ESTTSLPQSAK). The segment covering 6378-6389 (SGTTISSGGSHT) has biased composition (low complexity). Composition is skewed to polar residues over residues 6440 to 6457 (GRAT…TSQA) and 6470 to 6503 (TTIT…TTYI). Over residues 6507–6523 (GTTRGGLATATTGAFSG) the composition is skewed to low complexity. Polar residues predominate over residues 6560–6571 (TTFTSGGSHTEA). Residues 6581 to 6597 (TGTESRAATTRAAPGTT) are compositionally biased toward low complexity. Residues 6599-6608 (VPGSSNTGAT) show a composition bias toward polar residues. The span at 6612 to 6628 (GGSATTRGRITTATTGA) shows a compositional bias: low complexity. 2 stretches are compositionally biased toward polar residues: residues 6669–6680 (RITSGGSYTATT) and 6689–6698 (APGSSNTGAT). A compositionally biased stretch (low complexity) spans 6707 to 6718 (TRGRITTATTGA). Residues 6752–6766 (TTLTGDRSSTGSESR) are compositionally biased toward polar residues. Residues 6767–6781 (TATTGVAPGTTVAPG) are compositionally biased toward low complexity. The span at 6794–6817 (SGTTNIGRATGATTSIVGSDTSQA) shows a compositional bias: polar residues. The span at 6827-6842 (SPGASSTSQSSRPGTS) shows a compositional bias: low complexity. Residues 6843–6875 (VTPDSSASESETVTTKEFSGTTAISRTSHTGTP) are compositionally biased toward polar residues. Over residues 6887 to 6901 (TATTGVAPGTTVAPG) the composition is skewed to low complexity. Composition is skewed to polar residues over residues 6902–6911 (SSNTEATTSV) and 6953–6964 (GTSEVAPSTTVA). Residues 6966 to 6994 (GSFSTAATTSPGASGTTGVTTTTKTTTSL) are compositionally biased toward low complexity. Positions 7006-7041 (SATTGAPGSRTGTAGVPSATTVSPGSSNSEATTSVG) are enriched in polar residues. A compositionally biased stretch (low complexity) spans 7045-7074 (KTGAETITEATTSTEGTGTSGTGFKTGTSE). A compositionally biased stretch (polar residues) spans 7085–7094 (SFSTAATTSP). Over residues 7095 to 7112 (GASGMTGVTTTTKTTTSL) the composition is skewed to low complexity. The span at 7143 to 7158 (TRVTPGSSNSEATTSV) shows a compositional bias: polar residues. Low complexity-rich tracts occupy residues 7201–7215 (SGSS…TEGT) and 7250–7276 (SFST…TTSL). Residues 7293–7311 (SGTTVAPGSSNSEATTSVG) are compositionally biased toward polar residues. The segment covering 7379 to 7397 (TTSTKGTGTSGTGFKTGTS) has biased composition (low complexity). The segment covering 7403–7421 (TTVSPGSFSTATISPGASR) has biased composition (polar residues). A compositionally biased stretch (low complexity) spans 7422 to 7435 (TTGAAPAAETTTSL). Residues 7465-7483 (SATTIAPGSSNSEATTSLG) are compositionally biased toward polar residues. Positions 7525–7537 (PLGGASGTSGGYV) are enriched in gly residues. Polar residues-rich tracts occupy residues 7544–7557 (PTTS…SRTI) and 7571–7596 (AGTS…TSPG). Low complexity predominate over residues 7600–7613 (MTGVRTTSKTTTSL). 2 stretches are compositionally biased toward polar residues: residues 7642 to 7669 (SSRT…SGTG) and 7698 to 7708 (SFSTAATTSPG). Low complexity predominate over residues 7715-7732 (TGPTAETTTFLGGSSTTG). Residues 7783-7811 (KNGSMTTALGSQLSSSQTVIPGSSGTISH) are compositionally biased toward polar residues. Over residues 7812–7828 (TTVAPGSSVTGTTTGAS) the composition is skewed to low complexity. The segment covering 7830–7851 (DQVTGSKTGTTGVALSTTVAPG) has biased composition (polar residues). The span at 7852 to 7861 (SSSTEATTST) shows a compositional bias: low complexity. Positions 7862-7891 (GVHRTTVVGQKTGATTRGSAKQGTRSTIEA) are enriched in polar residues. Over residues 7892 to 7917 (TTSFRGTGTTGSGMNTGTTGVVSGNT) the composition is skewed to low complexity. Polar residues predominate over residues 7918–7934 (ISPSSFNTEATSGTSER). Over residues 7938–7952 (GSEIGTTGIVSGTTV) the composition is skewed to low complexity. 4 stretches are compositionally biased toward polar residues: residues 7953 to 7965 (APGS…TTSL), 8020 to 8040 (SGRS…SGTT), 8048 to 8081 (TGNT…SISG), and 8110 to 8120 (ETGVQTGSTLV). Residues 8159-8225 (PVCHGPLGEE…DTCCEIGYCE (67 aa)) enclose the VWFC domain. 4 cysteine pairs are disulfide-bonded: Cys-8288–Cys-8339, Cys-8306–Cys-8353, Cys-8315–Cys-8369, and Cys-8319–Cys-8371. The CTCK domain occupies 8288–8376 (CKNNCRSSLV…TTCSCLDICQ (89 aa)).

Expressed corneal epithelial cells, conjunctival goblet and epithelial cells and lacrimal gland cells (at protein level). Expressed by mucous cells of the submandibular gland and submucosal gland of the trachea. Expressed by middle ear epithelial cells.

Its subcellular location is the secreted. Its function is as follows. May function in ocular mucus homeostasis. This Homo sapiens (Human) protein is Mucin-19 (MUC19).